A 604-amino-acid chain; its full sequence is Glutamyl-tRNA(Gln) amidotransferase subunit B, mitochondrial (604 aa).

Residues 1–48 constitute a mitochondrion transit peptide; that stretch reads MIRQCLSRRGAYSRYRLAARGVELAEPFHHQSSRPQGRRNWSSSPRCS. The disordered stretch occupies residues 28–57; the sequence is FHHQSSRPQGRRNWSSSPRCSLDIRTDTPR. Polar residues predominate over residues 33–46; that stretch reads SRPQGRRNWSSSPR.

It belongs to the GatB/GatE family. GatB subfamily. As to quaternary structure, subunit of the heterotrimeric GatCAB amidotransferase (AdT) complex, composed of A, B and C subunits.

It is found in the mitochondrion. It carries out the reaction L-glutamyl-tRNA(Gln) + L-glutamine + ATP + H2O = L-glutaminyl-tRNA(Gln) + L-glutamate + ADP + phosphate + H(+). Allows the formation of correctly charged Gln-tRNA(Gln) through the transamidation of misacylated Glu-tRNA(Gln) in the mitochondria. The reaction takes place in the presence of glutamine and ATP through an activated gamma-phospho-Glu-tRNA(Gln). The sequence is that of Glutamyl-tRNA(Gln) amidotransferase subunit B, mitochondrial from Blastomyces gilchristii (strain SLH14081) (Blastomyces dermatitidis).